We begin with the raw amino-acid sequence, 347 residues long: NADH-ubiquinone oxidoreductase chain 2 (347 aa).

10 helical membrane passes run Pro-3 to Ser-23, Trp-26 to Met-46, Ser-67 to Met-87, Tyr-96 to Pro-116, Leu-149 to Gly-169, Ile-178 to Thr-198, Leu-200 to Ile-220, Ile-239 to Gly-259, Asn-274 to Met-294, and Leu-325 to Ile-345.

Belongs to the complex I subunit 2 family. As to quaternary structure, core subunit of respiratory chain NADH dehydrogenase (Complex I) which is composed of 45 different subunits. Interacts with TMEM242.

The protein localises to the mitochondrion inner membrane. The enzyme catalyses a ubiquinone + NADH + 5 H(+)(in) = a ubiquinol + NAD(+) + 4 H(+)(out). Its function is as follows. Core subunit of the mitochondrial membrane respiratory chain NADH dehydrogenase (Complex I) which catalyzes electron transfer from NADH through the respiratory chain, using ubiquinone as an electron acceptor. Essential for the catalytic activity and assembly of complex I. This chain is NADH-ubiquinone oxidoreductase chain 2, found in Dasypus novemcinctus (Nine-banded armadillo).